A 278-amino-acid chain; its full sequence is Deoxyuridine 5'-triphosphate nucleotidohydrolase (278 aa).

Residues 171-173 (RSG) and 273-274 (FG) each bind substrate.

This sequence belongs to the dUTPase family. The cofactor is Mg(2+).

The catalysed reaction is dUTP + H2O = dUMP + diphosphate + H(+). In terms of biological role, involved in nucleotide metabolism: produces dUMP, the immediate precursor of thymidine nucleotides and decreases the intracellular concentration of dUTP to avoid uracil incorporation into viral DNA. The polypeptide is Deoxyuridine 5'-triphosphate nucleotidohydrolase (Homo sapiens (Human)).